The primary structure comprises 204 residues: Large ribosomal subunit protein bL25 (204 aa).

This sequence belongs to the bacterial ribosomal protein bL25 family. CTC subfamily. Part of the 50S ribosomal subunit; part of the 5S rRNA/L5/L18/L25 subcomplex. Contacts the 5S rRNA. Binds to the 5S rRNA independently of L5 and L18.

This is one of the proteins that binds to the 5S RNA in the ribosome where it forms part of the central protuberance. In Pseudomonas syringae pv. syringae (strain B728a), this protein is Large ribosomal subunit protein bL25.